A 358-amino-acid polypeptide reads, in one-letter code: RNA demethylase ALKBH5 (358 aa).

A disordered region spans residues 1-50; the sequence is MSATYTDLREKLQSLYRDSPKEVRKRKQPTSDTEEEEAASEPEEEEEARK. The span at 7-22 shows a compositional bias: basic and acidic residues; sequence DLREKLQSLYRDSPKE. The span at 32 to 46 shows a compositional bias: acidic residues; sequence DTEEEEAASEPEEEE. Tyr-105 is a catalytic residue. The 2-oxoglutarate site is built by Asn-159, Tyr-161, His-170, His-232, and Arg-243. A disulfide bridge links Cys-196 with Cys-233. Disordered stretches follow at residues 259 to 312 and 334 to 358; these read EMKS…RRSV and DYVD…MRRH. The span at 262–278 shows a compositional bias: polar residues; sequence SLSSSYQPERLQGSNRQ. The span at 279–288 shows a compositional bias: basic residues; that stretch reads HILKPKRSHR. Residues 289–310 show a composition bias toward basic and acidic residues; the sequence is KADPDAAHRPRILEMDKEENRR.

It belongs to the alkB family. In terms of assembly, monomer. Fe(2+) is required as a cofactor.

The protein resides in the nucleus speckle. The enzyme catalyses an N(6)-methyladenosine in mRNA + 2-oxoglutarate + O2 = an adenosine in mRNA + formaldehyde + succinate + CO2. Functionally, dioxygenase that specifically demethylates N(6)-methyladenosine (m6A) RNA, the most prevalent internal modification of messenger RNA (mRNA) in higher eukaryotes. Demethylates RNA by oxidative demethylation, which requires molecular oxygen, alpha-ketoglutarate and iron. Demethylation of m6A mRNA affects mRNA processing, translation and export. In Xenopus tropicalis (Western clawed frog), this protein is RNA demethylase ALKBH5 (alkbh5).